A 432-amino-acid chain; its full sequence is Mitochondrial distribution and morphology protein 12 (432 aa).

One can recognise an SMP-LTD domain in the interval 1–432 (MSIEVDWRAA…VFPSFWTFLI (432 aa)). 2 disordered regions span residues 182-273 (WTDP…PRMR) and 354-377 (QQEARGQDDRPWSSADPTASPKRQ). Positions 214-234 (TSNPTSRPSTSSTLPSHPSAS) are enriched in low complexity. 2 stretches are compositionally biased toward basic and acidic residues: residues 243-253 (TGKEHGSLAED) and 355-364 (QEARGQDDRP).

The protein belongs to the MDM12 family. In terms of assembly, component of the ER-mitochondria encounter structure (ERMES) or MDM complex, composed of mmm1, mdm10, mdm12 and mdm34. A mmm1 homodimer associates with one molecule of mdm12 on each side in a pairwise head-to-tail manner, and the SMP-LTD domains of mmm1 and mdm12 generate a continuous hydrophobic tunnel for phospholipid trafficking.

Its subcellular location is the mitochondrion outer membrane. The protein resides in the endoplasmic reticulum membrane. In terms of biological role, component of the ERMES/MDM complex, which serves as a molecular tether to connect the endoplasmic reticulum (ER) and mitochondria. Components of this complex are involved in the control of mitochondrial shape and protein biogenesis, and function in nonvesicular lipid trafficking between the ER and mitochondria. Mdm12 is required for the interaction of the ER-resident membrane protein MMM1 and the outer mitochondrial membrane-resident beta-barrel protein mdm10. The mdm12-mmm1 subcomplex functions in the major beta-barrel assembly pathway that is responsible for biogenesis of all mitochondrial outer membrane beta-barrel proteins, and acts in a late step after the SAM complex. The mdm10-mdm12-mmm1 subcomplex further acts in the TOM40-specific pathway after the action of the mdm12-mmm1 complex. Essential for establishing and maintaining the structure of mitochondria and maintenance of mtDNA nucleoids. This is Mitochondrial distribution and morphology protein 12 from Aspergillus flavus (strain ATCC 200026 / FGSC A1120 / IAM 13836 / NRRL 3357 / JCM 12722 / SRRC 167).